The sequence spans 24 residues: Lycosin-I (24 aa).

This sequence belongs to the cationic peptide 04 (cupiennin) family. 05 subfamily. In terms of assembly, monomer in solution. Small size oligomers on the lipid membranes.

It is found in the secreted. It localises to the target cell membrane. Functionally, antimicrobial peptide that inhibits many reference strains of bacteria and fungi. Is potent against Candida species and multidrug-resistant Acinetobacter baumannii (MDRAB). Is probably localized in the cytoplasm after being transported through the cell wall and membrane. Is able to interact with cell membranes and enter into cell plasma to activate the mitochondrial death pathway to sensitize cancer cells for apoptosis, as well as up-regulates p27 to inhibit cell proliferation. It shows very low effect on normal cells, such as erythrocytes, Hek293t cells. It also potently inhibits tumor cell growth in vitro, and suppresses various tumor growth in vivo when tested in human cancer xenograft models. It interacts with the cell membrane and is then internalized into the cytoplasm of cancer cells to initiate the programmable cell death. In addition, this peptide has the therapeutic effects of anti-hypertension by endothelium-dependent vasodilatation via the NO/sGC/cGMP signaling pathway. In vivo, this peptide also shows a significant ability to inhibit T.gondii invasion and proliferation, making it a potential alternative agent for the treatment of toxoplasmosis. The chain is Lycosin-I from Lycosa singoriensis (Wolf spider).